A 348-amino-acid chain; its full sequence is EGF-like domain containing protein 1 (348 aa).

The signal sequence occupies residues Met1–Cys19. An EGF-like domain is found at Thr60–Glu92. 3 disulfides stabilise this stretch: Cys64–Cys74, Cys68–Cys80, and Cys82–Cys91. Positions Arg99–Gln342 constitute a ZP domain.

Prismatic layer of shell (at protein level). Expressed primarily in the mantle with highest level in the mantle edge and lower level in the mantle pallium.

It localises to the secreted. The protein is EGF-like domain containing protein 1 of Margaritifera margaritifera (Freshwater pearl mussel).